Reading from the N-terminus, the 114-residue chain is Fatty acid-binding protein, liver (114 aa).

Belongs to the calycin superfamily. Fatty-acid binding protein (FABP) family. In terms of processing, the N-terminus is blocked.

The protein resides in the cytoplasm. In terms of biological role, FABPs are thought to play a role in the intracellular transport of long-chain fatty acids and their acyl-CoA esters. The sequence is that of Fatty acid-binding protein, liver from Lethenteron camtschaticum (Japanese lamprey).